A 223-amino-acid polypeptide reads, in one-letter code: Probable iron-sulfur cluster repair protein HI_1677 (223 aa).

This sequence belongs to the RIC family.

It localises to the cytoplasm. In terms of biological role, di-iron-containing protein involved in the repair of iron-sulfur clusters. In Haemophilus influenzae (strain ATCC 51907 / DSM 11121 / KW20 / Rd), this protein is Probable iron-sulfur cluster repair protein HI_1677.